We begin with the raw amino-acid sequence, 457 residues long: Siroheme synthase (457 aa).

The interval 1–204 (MEIFPISLKL…DNLDIANQMM (204 aa)) is precorrin-2 dehydrogenase /sirohydrochlorin ferrochelatase. NAD(+) contacts are provided by residues 22 to 23 (HI) and 43 to 44 (PD). Position 129 is a phosphoserine (Ser129). A uroporphyrinogen-III C-methyltransferase region spans residues 216–457 (GEVYLVGAGP…VSLREQLQWL (242 aa)). Pro225 contacts S-adenosyl-L-methionine. Asp248 serves as the catalytic Proton acceptor. Lys270 acts as the Proton donor in catalysis. S-adenosyl-L-methionine is bound by residues 301-303 (GGD), Ile306, 331-332 (TA), Met383, and Gly412.

It in the N-terminal section; belongs to the precorrin-2 dehydrogenase / sirohydrochlorin ferrochelatase family. This sequence in the C-terminal section; belongs to the precorrin methyltransferase family.

It catalyses the reaction uroporphyrinogen III + 2 S-adenosyl-L-methionine = precorrin-2 + 2 S-adenosyl-L-homocysteine + H(+). The catalysed reaction is precorrin-2 + NAD(+) = sirohydrochlorin + NADH + 2 H(+). The enzyme catalyses siroheme + 2 H(+) = sirohydrochlorin + Fe(2+). Its pathway is cofactor biosynthesis; adenosylcobalamin biosynthesis; precorrin-2 from uroporphyrinogen III: step 1/1. The protein operates within cofactor biosynthesis; adenosylcobalamin biosynthesis; sirohydrochlorin from precorrin-2: step 1/1. It participates in porphyrin-containing compound metabolism; siroheme biosynthesis; precorrin-2 from uroporphyrinogen III: step 1/1. It functions in the pathway porphyrin-containing compound metabolism; siroheme biosynthesis; siroheme from sirohydrochlorin: step 1/1. Its pathway is porphyrin-containing compound metabolism; siroheme biosynthesis; sirohydrochlorin from precorrin-2: step 1/1. Functionally, multifunctional enzyme that catalyzes the SAM-dependent methylations of uroporphyrinogen III at position C-2 and C-7 to form precorrin-2 via precorrin-1. Then it catalyzes the NAD-dependent ring dehydrogenation of precorrin-2 to yield sirohydrochlorin. Finally, it catalyzes the ferrochelation of sirohydrochlorin to yield siroheme. This chain is Siroheme synthase, found in Acinetobacter baylyi (strain ATCC 33305 / BD413 / ADP1).